The sequence spans 822 residues: Adhesion G protein-coupled receptor E2 (822 aa).

An N-terminal signal peptide occupies residues 1–18 (MGGRVFLAFCVWLTLLGA). At 19 to 530 (ETQDSRDCAR…DVQEEDPVLT (512 aa)) the chain is on the extracellular side. One can recognise an EGF-like 1 domain in the interval 22–63 (DSRDCARWCPENSSCVNATACRCNPGFSSSSEIFTSPTEICD). Intrachain disulfides connect cysteine 26/cysteine 36, cysteine 30/cysteine 42, cysteine 44/cysteine 62, cysteine 68/cysteine 82, and cysteine 76/cysteine 91. Asparagine 33 and asparagine 38 each carry an N-linked (GlcNAc...) asparagine glycan. Residues 64-103 (DINECVPPSKVSCGKSSDCRNTEGSYDCVCNPGYELVSGA) enclose the EGF-like 1; calcium-binding domain. A glycan (N-linked (GlcNAc...) asparagine) is linked at asparagine 108. The EGF-like 2; calcium-binding domain occupies 116–159 (DVDECQQNPRLCKSYGTCVNTLGSFTCQCLPGFKFKPEDPKLCT). Intrachain disulfides connect cysteine 120–cysteine 133, cysteine 127–cysteine 142, cysteine 144–cysteine 158, cysteine 164–cysteine 177, and cysteine 171–cysteine 186. The region spanning 160–198 (DVNECTSGQNPCHSSTHCLNNVGSYQCRCRPGWQPIPGS) is the EGF-like 3; calcium-binding domain. N-linked (GlcNAc...) asparagine glycosylation is found at asparagine 203, asparagine 222, asparagine 351, asparagine 371, asparagine 427, asparagine 449, and asparagine 453. One can recognise an EGF-like 4; calcium-binding domain in the interval 209–247 (DVDECSSGLHQCDNSTVCFNTVGSYTCRCRPGWEPKHGI). Disulfide bonds link cysteine 213/cysteine 226 and cysteine 220/cysteine 235. The GAIN-B domain occupies 351 to 523 (NFSYPAGTEF…AVLMAPYDVQ (173 aa)). 2 disulfide bridges follow: cysteine 475-cysteine 505 and cysteine 493-cysteine 507. The interval 475-523 (CVFWEHGQNGCGHWATTGCSTMDTRDTSTICRCTHLSSFAVLMAPYDVQ) is GPS. The chain crosses the membrane as a helical span at residues 531 to 551 (VITYMGLSLSLLCLLLAALTF). Topologically, residues 552-562 (LLCKAIQNIST) are cytoplasmic. A helical transmembrane segment spans residues 563–583 (SLHLQLSLCLLLAHLLFLVAI). The Extracellular portion of the chain corresponds to 584 to 589 (DRTEHE). Residues 590–610 (VLCAIIASALHYLYLAAFTWM) form a helical membrane-spanning segment. The Cytoplasmic segment spans residues 611–637 (LLEALYLFLTARNLMVVNYSSINRFTK). A helical transmembrane segment spans residues 638–658 (KLMFPVAYGVPAVTVAISAAS). Residues 659–676 (RPHLYGTPSRCWLQPEKG) are Extracellular-facing. The chain crosses the membrane as a helical span at residues 677–697 (FIWGFLGPVCAIFSVNLALLL). The Cytoplasmic portion of the chain corresponds to 698 to 728 (VTLWILKNRLSSLNNEVSTLQNTRMLAFKAT). Residues 729–749 (AQLFILGCTWCLGILQVGPAA) form a helical membrane-spanning segment. The Extracellular portion of the chain corresponds to 750–753 (RVMA). The helical transmembrane segment at 754–774 (YLFTIINSLQGVFIFLVYCLL) threads the bilayer. The Cytoplasmic portion of the chain corresponds to 775 to 822 (SQQVREQYRKWSKGFRKLRTESEMHTLSSSAKRDTPKPSTPGLLGLQS). A disordered region spans residues 797–822 (EMHTLSSSAKRDTPKPSTPGLLGLQS).

It belongs to the G-protein coupled receptor 2 family. Adhesion G-protein coupled receptor (ADGR) subfamily. As to quaternary structure, forms a heterodimer, consisting of a large extracellular region non-covalently linked to a seven-transmembrane moiety. Interacts with chondroitin sulfate; the interaction with chondroitin sulfate is calcium-dependent. Interacts with CD55. In terms of processing, autoproteolytically cleaved into 2 subunits, an extracellular alpha subunit and a seven-transmembrane beta subunit.

The protein resides in the cell membrane. It localises to the cell projection. It is found in the ruffle membrane. In terms of biological role, cell surface receptor that binds to the chondroitin sulfate moiety of glycosaminoglycan chains and promotes cell attachment. Promotes granulocyte chemotaxis, degranulation and adhesion. In macrophages, promotes the release of inflammatory cytokines, including IL8 and TNF. Signals probably through G-proteins. The polypeptide is Adhesion G protein-coupled receptor E2 (ADGRE2) (Macaca mulatta (Rhesus macaque)).